The chain runs to 665 residues: DNA ligase (665 aa).

NAD(+) is bound by residues 31–35 (DEEFD), 80–81 (SL), and Glu111. The active-site N6-AMP-lysine intermediate is Lys113. Arg134, Glu171, Lys287, and Lys311 together coordinate NAD(+). Zn(2+) contacts are provided by Cys405, Cys408, Cys423, and Cys429. Residues 588-665 (FTNHAFQGKI…NEKEFISLCH (78 aa)) form the BRCT domain.

Belongs to the NAD-dependent DNA ligase family. LigA subfamily. The cofactor is Mg(2+). Requires Mn(2+) as cofactor.

It carries out the reaction NAD(+) + (deoxyribonucleotide)n-3'-hydroxyl + 5'-phospho-(deoxyribonucleotide)m = (deoxyribonucleotide)n+m + AMP + beta-nicotinamide D-nucleotide.. In terms of biological role, DNA ligase that catalyzes the formation of phosphodiester linkages between 5'-phosphoryl and 3'-hydroxyl groups in double-stranded DNA using NAD as a coenzyme and as the energy source for the reaction. It is essential for DNA replication and repair of damaged DNA. This Protochlamydia amoebophila (strain UWE25) protein is DNA ligase.